Reading from the N-terminus, the 362-residue chain is GDSL esterase/lipase At5g18430 (362 aa).

An N-terminal signal peptide occupies residues 1-19 (MTISTVIAFMSMFLVFVMS). The Nucleophile role is filled by S35. N-linked (GlcNAc...) asparagine glycosylation is present at N117. Residues D327 and H330 contribute to the active site. Residue N355 is glycosylated (N-linked (GlcNAc...) asparagine).

The protein belongs to the 'GDSL' lipolytic enzyme family.

The protein localises to the secreted. The chain is GDSL esterase/lipase At5g18430 from Arabidopsis thaliana (Mouse-ear cress).